Reading from the N-terminus, the 1136-residue chain is Carbamoyl phosphate synthase large chain (1136 aa).

Residues 1 to 402 (MPKRTDIKSV…SLGKAMRSID (402 aa)) are carboxyphosphate synthetic domain. 12 residues coordinate ATP: Arg-129, Arg-169, Gly-175, Gly-176, Glu-208, Ile-210, Glu-215, Gly-241, Val-242, His-243, Gln-285, and Glu-299. Residues 133 to 328 (KKVVKEAGAE…IAKIATKLAL (196 aa)) form the ATP-grasp 1 domain. Mg(2+) is bound by residues Gln-285, Glu-299, and Asn-301. 3 residues coordinate Mn(2+): Gln-285, Glu-299, and Asn-301. The oligomerization domain stretch occupies residues 403–551 (KRHMGFSWDG…YYYSCYADET (149 aa)). Residues 552-962 (ELRKREREAV…AFAKSQLASY (411 aa)) are carbamoyl phosphate synthetic domain. Residues 681–881 (GEVLRQEHLN…LAKAAARIMA (201 aa)) enclose the ATP-grasp 2 domain. 10 residues coordinate ATP: Arg-717, Lys-765, Leu-767, Glu-772, Gly-797, Val-798, His-799, Ser-800, Gln-840, and Glu-852. The Mg(2+) site is built by Gln-840, Glu-852, and Asn-854. Gln-840, Glu-852, and Asn-854 together coordinate Mn(2+). The allosteric domain stretch occupies residues 963 to 1136 (EGGLPTNGNV…KEEGEEARAQ (174 aa)). The region spanning 964–1122 (GGLPTNGNVF…QEHSRELYEL (159 aa)) is the MGS-like domain.

The protein belongs to the CarB family. As to quaternary structure, composed of two chains; the small (or glutamine) chain promotes the hydrolysis of glutamine to ammonia, which is used by the large (or ammonia) chain to synthesize carbamoyl phosphate. Tetramer of heterodimers (alpha,beta)4. Mg(2+) is required as a cofactor. Requires Mn(2+) as cofactor.

The enzyme catalyses hydrogencarbonate + L-glutamine + 2 ATP + H2O = carbamoyl phosphate + L-glutamate + 2 ADP + phosphate + 2 H(+). The catalysed reaction is hydrogencarbonate + NH4(+) + 2 ATP = carbamoyl phosphate + 2 ADP + phosphate + 2 H(+). Its pathway is amino-acid biosynthesis; L-arginine biosynthesis; carbamoyl phosphate from bicarbonate: step 1/1. It functions in the pathway pyrimidine metabolism; UMP biosynthesis via de novo pathway; (S)-dihydroorotate from bicarbonate: step 1/3. Functionally, large subunit of the glutamine-dependent carbamoyl phosphate synthetase (CPSase). CPSase catalyzes the formation of carbamoyl phosphate from the ammonia moiety of glutamine, carbonate, and phosphate donated by ATP, constituting the first step of 2 biosynthetic pathways, one leading to arginine and/or urea and the other to pyrimidine nucleotides. The large subunit (synthetase) binds the substrates ammonia (free or transferred from glutamine from the small subunit), hydrogencarbonate and ATP and carries out an ATP-coupled ligase reaction, activating hydrogencarbonate by forming carboxy phosphate which reacts with ammonia to form carbamoyl phosphate. This chain is Carbamoyl phosphate synthase large chain, found in Bifidobacterium animalis subsp. lactis (strain AD011).